Here is a 321-residue protein sequence, read N- to C-terminus: ATP-dependent 6-phosphofructokinase (321 aa).

ATP is bound at residue Gly-12. Residues 22 to 26 and 55 to 60 each bind ADP; these read RAVVR and RYSVSD. ATP contacts are provided by residues 73 to 74 and 103 to 106; these read RF and GDGS. Asp-104 lines the Mg(2+) pocket. 127–129 contacts substrate; the sequence is TID. Asp-129 acts as the Proton acceptor in catalysis. Arg-156 lines the ADP pocket. Substrate contacts are provided by residues Arg-164 and 171-173; that span reads MGR. ADP-binding positions include 187–189 and 215–217; these read GCE and KRH. Substrate contacts are provided by residues Glu-224, Arg-245, and 251–254; that span reads HVQR.

The protein belongs to the phosphofructokinase type A (PFKA) family. ATP-dependent PFK group I subfamily. Prokaryotic clade 'B1' sub-subfamily. Homotetramer. Requires Mg(2+) as cofactor.

It is found in the cytoplasm. It catalyses the reaction beta-D-fructose 6-phosphate + ATP = beta-D-fructose 1,6-bisphosphate + ADP + H(+). The protein operates within carbohydrate degradation; glycolysis; D-glyceraldehyde 3-phosphate and glycerone phosphate from D-glucose: step 3/4. Its activity is regulated as follows. Allosterically activated by ADP and other diphosphonucleosides, and allosterically inhibited by phosphoenolpyruvate. In terms of biological role, catalyzes the phosphorylation of D-fructose 6-phosphate to fructose 1,6-bisphosphate by ATP, the first committing step of glycolysis. The polypeptide is ATP-dependent 6-phosphofructokinase (Actinobacillus succinogenes (strain ATCC 55618 / DSM 22257 / CCUG 43843 / 130Z)).